The primary structure comprises 446 residues: tRNA(Ile2) 2-agmatinylcytidine synthetase TiaS (446 aa).

Belongs to the TiaS family.

It localises to the cytoplasm. It catalyses the reaction cytidine(34) in tRNA(Ile2) + agmatine + ATP + H2O = 2-agmatinylcytidine(34) in tRNA(Ile2) + AMP + 2 phosphate + 2 H(+). ATP-dependent agmatine transferase that catalyzes the formation of 2-agmatinylcytidine (agm2C) at the wobble position (C34) of tRNA(Ile2), converting the codon specificity from AUG to AUA. This is tRNA(Ile2) 2-agmatinylcytidine synthetase TiaS from Cenarchaeum symbiosum (strain A).